Here is a 342-residue protein sequence, read N- to C-terminus: UDP-N-acetylenolpyruvoylglucosamine reductase (342 aa).

The region spanning 13 to 183 (IDHNAQHIVC…VAVGLRLPKE (171 aa)) is the FAD-binding PCMH-type domain. Residue Arg-159 is part of the active site. Tyr-190 is a binding site for substrate. Ser-229 serves as the catalytic Proton donor. The active site involves Glu-325.

The protein belongs to the MurB family. In terms of assembly, monomer. The cofactor is FAD.

It localises to the cytoplasm. The enzyme catalyses UDP-N-acetyl-alpha-D-muramate + NADP(+) = UDP-N-acetyl-3-O-(1-carboxyvinyl)-alpha-D-glucosamine + NADPH + H(+). It participates in cell wall biogenesis; peptidoglycan biosynthesis. Functionally, cell wall formation. In Escherichia coli (strain K12), this protein is UDP-N-acetylenolpyruvoylglucosamine reductase (murB).